The primary structure comprises 200 residues: Small ribosomal subunit protein uS4 (200 aa).

Positions 20–41 (SGTGKELEKRPYAPGQHGPNQR) are disordered. The S4 RNA-binding domain maps to 92 to 155 (ARLDAVVYSL…LKLDIIAESV (64 aa)).

This sequence belongs to the universal ribosomal protein uS4 family. Part of the 30S ribosomal subunit. Contacts protein S5. The interaction surface between S4 and S5 is involved in control of translational fidelity.

In terms of biological role, one of the primary rRNA binding proteins, it binds directly to 16S rRNA where it nucleates assembly of the body of the 30S subunit. Functionally, with S5 and S12 plays an important role in translational accuracy. The chain is Small ribosomal subunit protein uS4 from Staphylococcus saprophyticus subsp. saprophyticus (strain ATCC 15305 / DSM 20229 / NCIMB 8711 / NCTC 7292 / S-41).